The primary structure comprises 345 residues: MRFIDEASITVISGKGGPGCVSFRRERFIERGGPNGGDGGKGGSVIFETDPAKRTLFDLRRQKIIRAKNGMPGLGSNKHGKNGVDLIIPVPPGTLVTDQETGAVLFDLTEPGTRITIAKGGRGGQGNKRFATSTHKAPRFAQPGMPGEEFHLKLELKLLADVGIVGLPNAGKSTLISKISSARPRIADYPFTTLTPSLGMVIPDFGEPFAVADIPGIIEGAHEGTGLGIQFLKHVERTGILIHLIDVSQIEPDNPLDAFNLINTELSLYSATLAKKPQLVVLNKIDLTGSMEKVEQFKKAYGTGELLTLSAATGEGTAKLIQILARQIAEHKPLERKSETDHGNK.

One can recognise an Obg domain in the interval 1-159 (MRFIDEASIT…FHLKLELKLL (159 aa)). Residues 160 to 329 (ADVGIVGLPN…LIQILARQIA (170 aa)) enclose the OBG-type G domain. GTP is bound by residues 166–173 (GLPNAGKS), 191–195 (FTTLT), 213–216 (DIPG), 283–286 (NKID), and 310–312 (SAA). Mg(2+) contacts are provided by serine 173 and threonine 193.

This sequence belongs to the TRAFAC class OBG-HflX-like GTPase superfamily. OBG GTPase family. In terms of assembly, monomer. The cofactor is Mg(2+).

The protein localises to the cytoplasm. An essential GTPase which binds GTP, GDP and possibly (p)ppGpp with moderate affinity, with high nucleotide exchange rates and a fairly low GTP hydrolysis rate. Plays a role in control of the cell cycle, stress response, ribosome biogenesis and in those bacteria that undergo differentiation, in morphogenesis control. This chain is GTPase Obg, found in Desulforapulum autotrophicum (strain ATCC 43914 / DSM 3382 / VKM B-1955 / HRM2) (Desulfobacterium autotrophicum).